We begin with the raw amino-acid sequence, 255 residues long: tRNA pseudouridine synthase A (255 aa).

The Nucleophile role is filled by D52. Y111 contributes to the substrate binding site.

The protein belongs to the tRNA pseudouridine synthase TruA family. As to quaternary structure, homodimer.

It carries out the reaction uridine(38/39/40) in tRNA = pseudouridine(38/39/40) in tRNA. Its function is as follows. Formation of pseudouridine at positions 38, 39 and 40 in the anticodon stem and loop of transfer RNAs. The protein is tRNA pseudouridine synthase A of Nitrobacter winogradskyi (strain ATCC 25391 / DSM 10237 / CIP 104748 / NCIMB 11846 / Nb-255).